A 533-amino-acid chain; its full sequence is Beta-glucosidase 22 (533 aa).

A signal peptide spans Met1–Ala24. A glycan (N-linked (GlcNAc...) asparagine) is linked at Asn41. A beta-D-glucoside contacts are provided by residues Gln61, His161, and Asp206–Glu207. The active-site Proton donor is Glu207. An intrachain disulfide couples Cys226 to Cys234. Residues Asn233 and Asn238 are each glycosylated (N-linked (GlcNAc...) asparagine). Positions 350 and 421 each coordinate a beta-D-glucoside. Glu421 functions as the Nucleophile in the catalytic mechanism. Asn435 carries N-linked (GlcNAc...) asparagine glycosylation. Positions 466 and 482 each coordinate a beta-D-glucoside.

It belongs to the glycosyl hydrolase 1 family.

The enzyme catalyses Hydrolysis of terminal, non-reducing beta-D-glucosyl residues with release of beta-D-glucose.. The protein is Beta-glucosidase 22 (BGLU22) of Oryza sativa subsp. japonica (Rice).